The primary structure comprises 286 residues: Undecaprenyl-diphosphatase (286 aa).

Transmembrane regions (helical) follow at residues 5-25 (WFII…FLPV), 55-75 (IDAF…VLYW), 92-112 (SGFK…VLGL), 122-142 (LFNP…MIFA), 185-205 (IIGA…SFFL), 229-249 (MHIV…LIVV), and 264-284 (FAMY…FNVI).

Belongs to the UppP family.

It localises to the cell membrane. The enzyme catalyses di-trans,octa-cis-undecaprenyl diphosphate + H2O = di-trans,octa-cis-undecaprenyl phosphate + phosphate + H(+). Catalyzes the dephosphorylation of undecaprenyl diphosphate (UPP). Confers resistance to bacitracin. The protein is Undecaprenyl-diphosphatase of Clostridium novyi (strain NT).